We begin with the raw amino-acid sequence, 824 residues long: MSNPVCISNSTNGSSNSLNGESVSPNRLGSSPGSPISKASSFDLNGKKPTKSNVVRLLLNRTNSGSNLLSKRRTSETGDDDSNSSVGLLNNSTGSIGKMNTPESSPKSSYILSSSIGSGGSGGGGGSSGSLQNLDSASNNSSGPRSRSGSLGKNNSSQQNNNNLILDPNFNNIDKSLWTVRSLKEHSNLVDIMERIKPASRAISFGQIYASEETQFEFDPVIGRDNILQLILQHLQFEGLMDSRKILEEEAKIQYPEYTFNESRLVTLLRAVIKDSDKVFDLTLNDRDKDSQQKLEEHLAFLGLFKDESQTNMVEDVNIYDEPENSNIIYVDEKDNDKPSKDSPTTATTTTTATTIAPSTSINNLSSLSVSISSNNINNNNNNNNNINNLNSTQLISNTQQQQATPNTPPQGLKSTQSITGSTGTLGPQVKAASLNKLVILLTPENNHDLEYTKTFLLMYQSFTTPEILLQKLIQRYHVPQKAGQSVAEWRQRSTHIQLRVLNVLKTWIKDYFSDFSEKLILAIKSLLESMRQTGNMSYAKVISDALNSGLKKSGRNNTVFTVSAPEPKVPKNIWSHNLDIFSVDEEEISRQLTLMDFEIFSNIKSTELLNQCWNKPKLRHRSPNVLELIGRFNEISQWTATSILSWPKVKDRARIMGKFIKIAEYCMKHLNNFNTSMAILSGLNASSVHRLKFTKEELPRHTQQVYTELQFHLSSAQAYKEYRALLAKANPPCLPYLGVYLTDLTFFEEGNPDFIQGFINFGKRKLIYGSISNVQSFQNTKYNLQPVYQIAKLLKGFKLLEENELYTRSMSFEPRNKERSEIL.

2 disordered regions span residues 1–51 and 65–167; these read MSNP…KPTK and GSNL…LILD. Positions 8-41 are enriched in low complexity; it reads SNSTNGSSNSLNGESVSPNRLGSSPGSPISKASS. Positions 83–95 are enriched in polar residues; that stretch reads NSSVGLLNNSTGS. Positions 104-116 are enriched in low complexity; sequence SSPKSSYILSSSI. Residues 117–128 show a composition bias toward gly residues; it reads GSGGSGGGGGSS. The span at 136-167 shows a compositional bias: low complexity; it reads SASNNSSGPRSRSGSLGKNNSSQQNNNNLILD. The LisH domain occupies 223-255; the sequence is GRDNILQLILQHLQFEGLMDSRKILEEEAKIQY. 2 disordered regions span residues 330–354 and 398–425; these read YVDE…TTAT and NTQQ…STGT. Residues 331 to 341 are compositionally biased toward basic and acidic residues; it reads VDEKDNDKPSK. The segment covering 343–354 has biased composition (low complexity); the sequence is SPTTATTTTTAT. The span at 413 to 425 shows a compositional bias: polar residues; sequence LKSTQSITGSTGT. One can recognise an N-terminal Ras-GEF domain in the interval 426 to 551; sequence LGPQVKAASL…VISDALNSGL (126 aa). Positions 585-816 constitute a Ras-GEF domain; it reads DEEEISRQLT…YTRSMSFEPR (232 aa).

Functionally, promotes the exchange of Ras-bound GDP by GTP. The protein is Ras guanine nucleotide exchange factor I (gefI) of Dictyostelium discoideum (Social amoeba).